Reading from the N-terminus, the 301-residue chain is Ribosomal protein L11 methyltransferase (301 aa).

S-adenosyl-L-methionine contacts are provided by Thr146, Gly167, Asp189, and Asn234.

This sequence belongs to the methyltransferase superfamily. PrmA family.

It is found in the cytoplasm. It catalyses the reaction L-lysyl-[protein] + 3 S-adenosyl-L-methionine = N(6),N(6),N(6)-trimethyl-L-lysyl-[protein] + 3 S-adenosyl-L-homocysteine + 3 H(+). Methylates ribosomal protein L11. This is Ribosomal protein L11 methyltransferase from Acinetobacter baumannii (strain SDF).